Consider the following 382-residue polypeptide: Intermediate transcription factor 3 large subunit (382 aa).

Belongs to the poxviruses A23 family. As to quaternary structure, heterodimer of a 45 kDa and a 32 kDa subunit.

In terms of biological role, acts with RNA polymerase to initiate transcription from intermediate gene promoters. The polypeptide is Intermediate transcription factor 3 large subunit (VITF3L) (Oryctolagus cuniculus (Rabbit)).